Reading from the N-terminus, the 182-residue chain is Peptidyl-tRNA hydrolase (182 aa).

Y14 contacts tRNA. Catalysis depends on H19, which acts as the Proton acceptor. F64, N66, and N112 together coordinate tRNA.

It belongs to the PTH family. As to quaternary structure, monomer.

It localises to the cytoplasm. The catalysed reaction is an N-acyl-L-alpha-aminoacyl-tRNA + H2O = an N-acyl-L-amino acid + a tRNA + H(+). Functionally, hydrolyzes ribosome-free peptidyl-tRNAs (with 1 or more amino acids incorporated), which drop off the ribosome during protein synthesis, or as a result of ribosome stalling. In terms of biological role, catalyzes the release of premature peptidyl moieties from peptidyl-tRNA molecules trapped in stalled 50S ribosomal subunits, and thus maintains levels of free tRNAs and 50S ribosomes. This Wolbachia pipientis wMel protein is Peptidyl-tRNA hydrolase.